Here is a 454-residue protein sequence, read N- to C-terminus: DNA-binding protein (454 aa).

The disordered stretch occupies residues 1–41 (MSHKKVVAISESSSDEEVPVAPPTAPPKKRQRKAVEEPRGH). Position 129 is a phosphotyrosine; by host (Y129). 2 residues coordinate Zn(2+): C213 and H215. Positions 226–260 (VEMDVNSENAQRALKENPEKTKIVSNRWGRNVVQF) are flexible loop. Zn(2+) contacts are provided by C268, C284, C325, C327, C378, and C394. Residues 440 to 454 (TILPQGQHDDDLVLF) are C-terminal arm, DBP binding.

Belongs to the adenoviridae E2A DNA-binding protein family. In terms of assembly, homomultimerizes on viral ssDNA bound to pTP. Forms a initiation complex with viral polymerase, pTP and hosts NFIA and POU2F1/OCT1. Interacts with host SRCAP.

Its subcellular location is the host nucleus. Plays a role in the elongation phase of viral strand displacement replication by unwinding the template in an ATP-independent fashion, employing its capacity to form multimers. Also enhances the rate of initiation. Released from template upon second strand synthesis. Assembles in complex with viral pTP, viral pol, host NFIA and host POU2F1/OCT1 on viral origin of replication. Covers the whole ssDNA genome during synthesis. The complementary strand synthesis induces its relese from DNA template. May inhibit cellular transcription mediated by the interaction between host SRCAP and CBP. This chain is DNA-binding protein, found in Canine adenovirus serotype 1 (strain RI261) (CAdV-1).